The sequence spans 348 residues: Killer cell immunoglobulin-like receptor 2DL1 (348 aa).

Positions 1–21 (MSLLVVSMACVGFFLLQGAWP) are cleaved as a signal peptide. Topologically, residues 22–245 (HEGVHRKPSL…SKTGNPRHLH (224 aa)) are extracellular. Ig-like C2-type domains lie at 42-107 (EETV…VTHS) and 142-205 (GENV…FHDS). A disulfide bond links cysteine 49 and cysteine 100. N-linked (GlcNAc...) asparagine glycosylation is found at asparagine 67, asparagine 84, asparagine 144, and asparagine 178. Residues cysteine 149 and cysteine 198 are joined by a disulfide bond. Residues 220–239 (VTGNPSNSWPSPTEPSSKTG) form a disordered region. A helical transmembrane segment spans residues 246–264 (ILIGTSVVIILFILLFFLL). The Cytoplasmic segment spans residues 265-348 (HRWCSNKKNA…ESRSKVVSCP (84 aa)).

Belongs to the immunoglobulin superfamily. As to quaternary structure, interacts with ARRB2. Interacts with PTPN6; the interaction is enhanced by ARRB2. Interacts with PTPN11; the interaction is enhanced by ARRB2. In terms of tissue distribution, expressed by NK cells.

Its subcellular location is the cell membrane. Functionally, receptor on natural killer (NK) cells for some HLA-C alleles such as w4 and w6. Inhibits the activity of NK cells thus preventing cell lysis. The protein is Killer cell immunoglobulin-like receptor 2DL1 of Homo sapiens (Human).